The primary structure comprises 336 residues: DNA-directed RNA polymerase subunit alpha (336 aa).

The interval 1-226 (MLIAQRPTLS…ELFGLARELN (226 aa)) is alpha N-terminal domain (alpha-NTD). The tract at residues 241 to 336 (AALAADMALP…DDAAFSDDEL (96 aa)) is alpha C-terminal domain (alpha-CTD).

Belongs to the RNA polymerase alpha chain family. As to quaternary structure, homodimer. The RNAP catalytic core consists of 2 alpha, 1 beta, 1 beta' and 1 omega subunit. When a sigma factor is associated with the core the holoenzyme is formed, which can initiate transcription.

The catalysed reaction is RNA(n) + a ribonucleoside 5'-triphosphate = RNA(n+1) + diphosphate. Functionally, DNA-dependent RNA polymerase catalyzes the transcription of DNA into RNA using the four ribonucleoside triphosphates as substrates. The protein is DNA-directed RNA polymerase subunit alpha of Paenarthrobacter aurescens (strain TC1).